Reading from the N-terminus, the 1356-residue chain is Probable aldehyde oxidase 3 (1356 aa).

The 2Fe-2S ferredoxin-type domain maps to 10–97 (RAVVVAVNGE…HCAVTTSEGI (88 aa)). [2Fe-2S] cluster is bound by residues C49, C54, C57, and C79. The region spanning 245-437 (VVVTGDGWFH…TFQTFRAAPR (193 aa)) is the FAD-binding PCMH-type domain. The tract at residues 552 to 576 (NGSFTNGTANGIVDSSPEKHSNVDS) is disordered.

The protein belongs to the xanthine dehydrogenase family. In terms of assembly, aldehyde oxidases (AO) are homodimers and heterodimers of AO subunits. Requires [2Fe-2S] cluster as cofactor. It depends on FAD as a cofactor. Mo-molybdopterin serves as cofactor.

It carries out the reaction an aldehyde + O2 + H2O = a carboxylate + H2O2 + H(+). In Oryza sativa subsp. japonica (Rice), this protein is Probable aldehyde oxidase 3.